Reading from the N-terminus, the 301-residue chain is uncharacterized protein (301 aa).

Positions 1-25 (MKFKNTLSIFKILIILFSFYNVAFS) are cleaved as a signal peptide. The Extracellular portion of the chain corresponds to 26-279 (DDTEKYTFKG…STTGSKDSST (254 aa)). Residues 174–281 (LYTGSSNTPN…TGSKDSSTGN (108 aa)) form a disordered region. 4 N-linked (GlcNAc...) asparagine glycosylation sites follow: Asn191, Asn212, Asn234, and Asn241. Positions 204-234 (SSSDSTNSNSSSTDTASSSPSSSPSSSPSPN) are enriched in low complexity. Residues 254-281 (GGVETSTAGSSTGTTSSTTGSKDSSTGN) are compositionally biased toward low complexity. A helical membrane pass occupies residues 280-300 (GNSILPTLIIVTFFVLTLVIM). Position 301 (Ser301) is a topological domain, cytoplasmic.

It is found in the membrane. This is an uncharacterized protein from Dictyostelium discoideum (Social amoeba).